The following is a 512-amino-acid chain: NADH-quinone oxidoreductase subunit M (512 aa).

The next 14 membrane-spanning stretches (helical) occupy residues 3–23 (NLLSIITFLPLAAAAVLAVVS), 36–56 (WVALTATVVTFLVSLLLLAGF), 84–104 (ISILFVMLTTFLMPLTIASAW), 112–132 (EYMIAFLVLEALMIGVFVALD), 133–153 (LVLFYLFFEAGLIPMFLIIGI), 166–186 (FFLYTFLGSVLMLVAMVAMYM), 208–228 (FLGWWTLTGGVQTLLFLAFFA), 251–271 (PTAGSVVLAAVLLKMGGYGFL), 285–305 (MTTFVFILSAVAIVYTSLVAL), 313–333 (LIAYSSVAHMGYVTMGIFAAN), 341–361 (IFQMLSHGFISGALFLCVGVI), 384–404 (ALIFMFFTMANVGLPGTSGFV), 419–439 (WVALFATSGVILSAAYALWLY), and 464–484 (AIFAPLVAMTLLLGVYPSLVT).

The protein belongs to the complex I subunit 4 family.

It localises to the cell membrane. The catalysed reaction is a quinone + NADH + 5 H(+)(in) = a quinol + NAD(+) + 4 H(+)(out). Its function is as follows. NDH-1 shuttles electrons from NADH, via FMN and iron-sulfur (Fe-S) centers, to quinones in the respiratory chain. The immediate electron acceptor for the enzyme in this species is believed to be ubiquinone. Couples the redox reaction to proton translocation (for every two electrons transferred, four hydrogen ions are translocated across the cytoplasmic membrane), and thus conserves the redox energy in a proton gradient. The protein is NADH-quinone oxidoreductase subunit M (nuoM) of Rhodobacter capsulatus (Rhodopseudomonas capsulata).